The chain runs to 515 residues: Bifunctional purine biosynthesis protein PurH (515 aa).

The region spanning 1–145 is the MGS-like domain; sequence MTKRALISVS…KNHASVTVVV (145 aa).

It belongs to the PurH family.

It catalyses the reaction (6R)-10-formyltetrahydrofolate + 5-amino-1-(5-phospho-beta-D-ribosyl)imidazole-4-carboxamide = 5-formamido-1-(5-phospho-D-ribosyl)imidazole-4-carboxamide + (6S)-5,6,7,8-tetrahydrofolate. It carries out the reaction IMP + H2O = 5-formamido-1-(5-phospho-D-ribosyl)imidazole-4-carboxamide. It participates in purine metabolism; IMP biosynthesis via de novo pathway; 5-formamido-1-(5-phospho-D-ribosyl)imidazole-4-carboxamide from 5-amino-1-(5-phospho-D-ribosyl)imidazole-4-carboxamide (10-formyl THF route): step 1/1. It functions in the pathway purine metabolism; IMP biosynthesis via de novo pathway; IMP from 5-formamido-1-(5-phospho-D-ribosyl)imidazole-4-carboxamide: step 1/1. The protein is Bifunctional purine biosynthesis protein PurH of Streptococcus equi subsp. equi (strain 4047).